We begin with the raw amino-acid sequence, 318 residues long: Chlorophyllase-2 (318 aa).

Positions 136–140 (GHSRG) match the GXSXG motif. The active-site Nucleophile is serine 138. Catalysis depends on charge relay system residues aspartate 167 and histidine 244.

This sequence belongs to the AB hydrolase superfamily. Lipase family. In terms of tissue distribution, expressed in leaves, flowers and flower buds, but not in roots.

The protein localises to the cytoplasm. The protein resides in the cytosol. The enzyme catalyses a chlorophyll + H2O = a chlorophyllide + phytol + H(+). The catalysed reaction is chlorophyll a + H2O = phytol + chlorophyllide a + H(+). It functions in the pathway porphyrin-containing compound metabolism; chlorophyll degradation. In terms of biological role, catalyzes the hydrolysis of ester bond in chlorophyll to yield chlorophyllide and phytol. Does not seem to be required for chlorophyll degradation during senescence. The sequence is that of Chlorophyllase-2 from Arabidopsis thaliana (Mouse-ear cress).